The chain runs to 413 residues: MRVIIVIMMVVFVVVGTSSGQEIILTSEKLINSAYQLQEIHEKVGIQSDIVTVEQIWDSYSPVEDPLVSGYSTEQVYDSYNYTLALKIISFLRTVNASYVTILGDADIVPPSYYAKLIFYEPFPTDFFYASPDYDLKPDFAVGRIPAGSEDEAEKVLGKINDWLSDIGSGNYVNAALIGMRIYAAPYSIERETIDDYEVWQGETAVKLLEDLGFTETFNTTIALQSDEEWTSVKQTFDEALSGGYGVVFHVGHGIPYALDSDDGGMYTTRYMNMLDKRRPLLPVVLSSGCSAAAFDEEIRDIYLPNWAPGLWSEFLLTNDAGGIAFVGFTGTTGSDYQFSESDGFVEVAGVKHADNILIKTLKNLPGNRLGDAFKAALEEVKSEENIKLNPSTEVEEWKLRVYLEAETKFLET.

Residues 1–20 (MRVIIVIMMVVFVVVGTSSG) form the signal peptide.

This is an uncharacterized protein from Archaeoglobus fulgidus (strain ATCC 49558 / DSM 4304 / JCM 9628 / NBRC 100126 / VC-16).